Here is a 471-residue protein sequence, read N- to C-terminus: tRNA-2-methylthio-N(6)-dimethylallyladenosine synthase (471 aa).

The 119-residue stretch at 33–151 (KKYMITTYGC…FPELLSRSME (119 aa)) folds into the MTTase N-terminal domain. Residues C42, C78, C112, C188, C192, and C195 each contribute to the [4Fe-4S] cluster site. The region spanning 174-404 (RKYDLKGFIN…LDKVNEISAE (231 aa)) is the Radical SAM core domain. The TRAM domain maps to 407-470 (QSYLNKVVEV…TFSLNGEVIQ (64 aa)).

This sequence belongs to the methylthiotransferase family. MiaB subfamily. In terms of assembly, monomer. It depends on [4Fe-4S] cluster as a cofactor.

It localises to the cytoplasm. The enzyme catalyses N(6)-dimethylallyladenosine(37) in tRNA + (sulfur carrier)-SH + AH2 + 2 S-adenosyl-L-methionine = 2-methylsulfanyl-N(6)-dimethylallyladenosine(37) in tRNA + (sulfur carrier)-H + 5'-deoxyadenosine + L-methionine + A + S-adenosyl-L-homocysteine + 2 H(+). Its function is as follows. Catalyzes the methylthiolation of N6-(dimethylallyl)adenosine (i(6)A), leading to the formation of 2-methylthio-N6-(dimethylallyl)adenosine (ms(2)i(6)A) at position 37 in tRNAs that read codons beginning with uridine. The sequence is that of tRNA-2-methylthio-N(6)-dimethylallyladenosine synthase from Alkaliphilus oremlandii (strain OhILAs) (Clostridium oremlandii (strain OhILAs)).